We begin with the raw amino-acid sequence, 196 residues long: C-type lectin domain family 2 member F (196 aa).

The segment at 1-21 is disordered; it reads MNAQCLKKPEEGESSPGTGDK. The Cytoplasmic portion of the chain corresponds to 1–41; it reads MNAQCLKKPEEGESSPGTGDKILQRNSLRAISPESSAKLYC. The chain crosses the membrane as a helical; Signal-anchor for type II membrane protein span at residues 42-62; sequence CCGVIMVLTVAVVALSVALPA. At 63 to 196 the chain is on the extracellular side; sequence TKTEQILINK…SRSSNYMLQC (134 aa). An intrachain disulfide couples Cys77 to Cys88. The region spanning 84 to 187 is the C-type lectin domain; the sequence is VGNKCFYFSE…DYIPRKWICS (104 aa). N-linked (GlcNAc...) asparagine glycosylation is present at Asn97. An intrachain disulfide couples Cys105 to Cys186.

It localises to the cell membrane. In terms of biological role, lectin-type cell surface receptor. In Mus musculus (Mouse), this protein is C-type lectin domain family 2 member F (Clec2f).